The sequence spans 266 residues: Glucosamine-6-phosphate deaminase 1 (266 aa).

Aspartate 67 serves as the catalytic Proton acceptor; for enolization step. Catalysis depends on asparagine 136, which acts as the For ring-opening step. Histidine 138 (proton acceptor; for ring-opening step) is an active-site residue. The active-site For ring-opening step is glutamate 143.

This sequence belongs to the glucosamine/galactosamine-6-phosphate isomerase family. In terms of assembly, homohexamer.

The protein localises to the cytoplasm. The enzyme catalyses alpha-D-glucosamine 6-phosphate + H2O = beta-D-fructose 6-phosphate + NH4(+). Functionally, catalyzes the reversible conversion of alpha-D-glucosamine 6-phosphate (GlcN-6P) into beta-D-fructose 6-phosphate (Fru-6P) and ammonium ion, a regulatory reaction step in de novo uridine diphosphate-N-acetyl-alpha-D-glucosamine (UDP-GlcNAc) biosynthesis via hexosamine pathway. The sequence is that of Glucosamine-6-phosphate deaminase 1 (GPI1) from Giardia intestinalis (Giardia lamblia).